The following is a 336-amino-acid chain: Phospho-N-acetylmuramoyl-pentapeptide-transferase (336 aa).

10 helical membrane passes run 1-21 (MLPL…SLFL), 56-76 (IPTA…LLLF), 78-98 (IQLW…ALGW), 124-144 (CLAA…FLSF), 148-168 (FLGI…FAIA), 184-204 (GLDG…LVVA), 210-230 (PWAF…LGFL), 239-259 (VFMG…CAVL), 264-284 (FLLL…IVQV), and 314-334 (VVRN…IAVF).

It belongs to the glycosyltransferase 4 family. MraY subfamily. Mg(2+) serves as cofactor.

The protein resides in the cell inner membrane. The catalysed reaction is UDP-N-acetyl-alpha-D-muramoyl-L-alanyl-gamma-D-glutamyl-meso-2,6-diaminopimeloyl-D-alanyl-D-alanine + di-trans,octa-cis-undecaprenyl phosphate = di-trans,octa-cis-undecaprenyl diphospho-N-acetyl-alpha-D-muramoyl-L-alanyl-D-glutamyl-meso-2,6-diaminopimeloyl-D-alanyl-D-alanine + UMP. Its pathway is cell wall biogenesis; peptidoglycan biosynthesis. In terms of biological role, catalyzes the initial step of the lipid cycle reactions in the biosynthesis of the cell wall peptidoglycan: transfers peptidoglycan precursor phospho-MurNAc-pentapeptide from UDP-MurNAc-pentapeptide onto the lipid carrier undecaprenyl phosphate, yielding undecaprenyl-pyrophosphoryl-MurNAc-pentapeptide, known as lipid I. The protein is Phospho-N-acetylmuramoyl-pentapeptide-transferase of Chlamydia trachomatis serovar L2b (strain UCH-1/proctitis).